We begin with the raw amino-acid sequence, 572 residues long: Proline--tRNA ligase (572 aa).

It belongs to the class-II aminoacyl-tRNA synthetase family. ProS type 1 subfamily. As to quaternary structure, homodimer.

Its subcellular location is the cytoplasm. The enzyme catalyses tRNA(Pro) + L-proline + ATP = L-prolyl-tRNA(Pro) + AMP + diphosphate. In terms of biological role, catalyzes the attachment of proline to tRNA(Pro) in a two-step reaction: proline is first activated by ATP to form Pro-AMP and then transferred to the acceptor end of tRNA(Pro). As ProRS can inadvertently accommodate and process non-cognate amino acids such as alanine and cysteine, to avoid such errors it has two additional distinct editing activities against alanine. One activity is designated as 'pretransfer' editing and involves the tRNA(Pro)-independent hydrolysis of activated Ala-AMP. The other activity is designated 'posttransfer' editing and involves deacylation of mischarged Ala-tRNA(Pro). The misacylated Cys-tRNA(Pro) is not edited by ProRS. In Psychrobacter arcticus (strain DSM 17307 / VKM B-2377 / 273-4), this protein is Proline--tRNA ligase.